Here is a 116-residue protein sequence, read N- to C-terminus: Host transcription reprogramming factor 4 (116 aa).

Residues 1–24 (MHIIHISKFMALLAISTIAIPTRG) form the signal peptide. The disordered stretch occupies residues 24–53 (GRSEVDSRDVNQAQTVTSGSSIAPSGSEKR). Residues 33–47 (VNQAQTVTSGSSIAP) show a composition bias toward polar residues. The segment at 74–96 (FQCPHCKDGISNRVALYTHVKAF) adopts a C2H2-type; degenerate zinc-finger fold.

The protein localises to the secreted. The protein resides in the host nucleus. Its function is as follows. Probable secreted effector that translocates into the nuclei of host cells to reprogram the expression of targeted genes by binding on effector binding elements in rice. This chain is Host transcription reprogramming factor 4, found in Pyricularia oryzae (strain 70-15 / ATCC MYA-4617 / FGSC 8958) (Rice blast fungus).